The sequence spans 82 residues: Small ribosomal subunit protein bS18A (82 aa).

This sequence belongs to the bacterial ribosomal protein bS18 family. Part of the 30S ribosomal subunit. Forms a tight heterodimer with protein bS6.

Functionally, binds as a heterodimer with protein bS6 to the central domain of the 16S rRNA, where it helps stabilize the platform of the 30S subunit. The sequence is that of Small ribosomal subunit protein bS18A from Streptomyces griseus subsp. griseus (strain JCM 4626 / CBS 651.72 / NBRC 13350 / KCC S-0626 / ISP 5235).